The chain runs to 205 residues: Recombination protein RecR (205 aa).

A C4-type zinc finger spans residues 64 to 79 (CSRCYFITQNDLCAIC). Positions 87 to 182 (RIVCVVEEPL…RVTRLARGLP (96 aa)) constitute a Toprim domain.

It belongs to the RecR family.

May play a role in DNA repair. It seems to be involved in an RecBC-independent recombinational process of DNA repair. It may act with RecF and RecO. The chain is Recombination protein RecR from Roseiflexus castenholzii (strain DSM 13941 / HLO8).